The chain runs to 237 residues: UPF0053 protein HI_0056 (237 aa).

The next 7 membrane-spanning stretches (helical) occupy residues 12-32 (ISLV…IIFI), 49-69 (ILGL…LAWI), 90-110 (ILLI…KEAI), 126-146 (YLGV…DSVI), 151-171 (MASH…VMMF), 188-208 (ILAL…SLDI), and 210-230 (IPKG…MINI).

The protein belongs to the UPF0053 family.

It localises to the cell membrane. This is UPF0053 protein HI_0056 from Haemophilus influenzae (strain ATCC 51907 / DSM 11121 / KW20 / Rd).